Consider the following 380-residue polypeptide: Transcription factor SOX-7 (380 aa).

A disordered region spans residues 24 to 43; it reads SDGLSPPAVPRPSGDKSSES. The HMG box DNA-binding region spans 45 to 113; that stretch reads IRRPMNAFMV…QHMQDYPNYK (69 aa). Residues 139–167 form a disordered region; that stretch reads SRDQNTLPEKNGIGRGEKEDRGEYSPGAT. A Sox C-terminal domain is found at 260–380; that stretch reads VSMMSSVSGC…ATYYNSYSVS (121 aa). The required for beta-catenin-binding stretch occupies residues 323–328; sequence EFDQYL.

In terms of assembly, interacts with CTNNB1/beta-catenin; this interaction may lead to the proteasomal degradation of active CTNNB1 and thus inhibition of Wnt/beta-catenin-stimulated transcription. As to expression, predominantly expressed in ovary, lung and heart. In the ovary, restricted to oocytes (at protein level). Present both in mesenchymal and epithelial cells in some adult tissues, including ear.

It is found in the nucleus. The protein resides in the cytoplasm. Its function is as follows. Binds to and activates the CDH5 promoter, hence plays a role in the transcriptional regulation of genes expressed in the hemogenic endothelium and blocks further differentiation into blood precursors. May be required for the survival of both hematopoietic and endothelial precursors during specification. May play a role in skeletal myogenesis and up-regulate the expression of muscle markers, such as PAX3/PAX7 and Meox1. Competes with GATA4 for binding and activation of the FGF3 promoter. Represses Wnt/beta-catenin-stimulated transcription. Probably acts by targeting CTNNB1 to proteasomal degradation. Binds the DNA sequence 5'-AACAAT-3'. This is Transcription factor SOX-7 (Sox7) from Mus musculus (Mouse).